Consider the following 395-residue polypeptide: MMILGNLRVATLSDGYGLIPDAAILIEGDRIQWVGPEAHLPPSAAPRHDMGGRLCTPALIDCHTHAVFAGTRAAEFEMRLKGASYAEVAAAGGGIVSTVMATRAASADELLAASLPRIDAMLAGGVGTVEIKSGYGLDIETELRMLRVARRIGQLRKVRVRTSFLGAHAVPPDYRGRPDAYLAEVVLPALKVAQDEGLVDAVDAFCEGIAFSPAQIAHLFAQAHKLRLPVKLHAEQLSNLGGAALAARHDALSADHLEYLDAEGVAALAAAGTVAVLLPGAFYALRETQAPPVAALRAAGVPMAVATDLNPGTSPLGALGLAMNMACTLFRLTPEEALAGTTIHAARALGLSDIGRIAPGFRADLAIWEAEHPAELSWRIGPAPLHVRLHEGEFV.

2 residues coordinate Fe(3+): His-63 and His-65. His-63 and His-65 together coordinate Zn(2+). 4-imidazolone-5-propanoate-binding residues include Arg-72, Tyr-135, and His-168. Residue Tyr-135 participates in N-formimidoyl-L-glutamate binding. His-233 is a Fe(3+) binding site. Residue His-233 coordinates Zn(2+). Gln-236 is a binding site for 4-imidazolone-5-propanoate. Position 308 (Asp-308) interacts with Fe(3+). Asp-308 serves as a coordination point for Zn(2+). N-formimidoyl-L-glutamate-binding residues include Asn-310 and Gly-312. Thr-313 provides a ligand contact to 4-imidazolone-5-propanoate.

It belongs to the metallo-dependent hydrolases superfamily. HutI family. Requires Zn(2+) as cofactor. Fe(3+) serves as cofactor.

Its subcellular location is the cytoplasm. The catalysed reaction is 4-imidazolone-5-propanoate + H2O = N-formimidoyl-L-glutamate. Its pathway is amino-acid degradation; L-histidine degradation into L-glutamate; N-formimidoyl-L-glutamate from L-histidine: step 3/3. Its function is as follows. Catalyzes the hydrolytic cleavage of the carbon-nitrogen bond in imidazolone-5-propanoate to yield N-formimidoyl-L-glutamate. It is the third step in the universal histidine degradation pathway. This Cereibacter sphaeroides (strain KD131 / KCTC 12085) (Rhodobacter sphaeroides) protein is Imidazolonepropionase.